A 422-amino-acid chain; its full sequence is 4-hydroxy-3-methylbut-2-en-1-yl diphosphate synthase (flavodoxin) (422 aa).

[4Fe-4S] cluster contacts are provided by Cys316, Cys319, Cys362, and Glu369.

Belongs to the IspG family. Requires [4Fe-4S] cluster as cofactor.

It carries out the reaction (2E)-4-hydroxy-3-methylbut-2-enyl diphosphate + oxidized [flavodoxin] + H2O + 2 H(+) = 2-C-methyl-D-erythritol 2,4-cyclic diphosphate + reduced [flavodoxin]. It participates in isoprenoid biosynthesis; isopentenyl diphosphate biosynthesis via DXP pathway; isopentenyl diphosphate from 1-deoxy-D-xylulose 5-phosphate: step 5/6. Converts 2C-methyl-D-erythritol 2,4-cyclodiphosphate (ME-2,4cPP) into 1-hydroxy-2-methyl-2-(E)-butenyl 4-diphosphate. In Anaplasma marginale (strain St. Maries), this protein is 4-hydroxy-3-methylbut-2-en-1-yl diphosphate synthase (flavodoxin).